The primary structure comprises 466 residues: Cysteine--tRNA ligase (466 aa).

C27 is a Zn(2+) binding site. The short motif at 29–39 (PTVYNYIHIGN) is the 'HIGH' region element. Zn(2+) contacts are provided by C207, H232, and E236. The short motif at 264 to 268 (KMSKS) is the 'KMSKS' region element. K267 provides a ligand contact to ATP.

It belongs to the class-I aminoacyl-tRNA synthetase family. In terms of assembly, monomer. Zn(2+) serves as cofactor.

It localises to the cytoplasm. It carries out the reaction tRNA(Cys) + L-cysteine + ATP = L-cysteinyl-tRNA(Cys) + AMP + diphosphate. The chain is Cysteine--tRNA ligase from Thermoanaerobacter pseudethanolicus (strain ATCC 33223 / 39E) (Clostridium thermohydrosulfuricum).